Consider the following 1433-residue polypeptide: MNEEQRVRQERFKLLMEQLLIPEDVTANHLKDGKIEKLTIKKDERRWHFQLSIPTVLPASIYELLADRLVQTFSHIAKVSFQIQYGQPDLSEQVWQSYWPLIVAKLTNISQPLKEMLEKQTPRFDGKRLVIQVGNETEAIALKRKLTEPLQQAVQSFGFPAVQLDAEVKESKQAFEKFVEQRKQEDHSKVVEAILEKKKLEQQVEKKMKEEKLTIGYPIKDEPVPLETIVEEERRITVQGYIFAAETKELRSGRTLLTFKITDYTDSILVKMFSRDKEDIPLLQAVKKGMWVKVRGGVQNDTFVRDLVMIANDVNEVSGKETKDEAPDDEKRVELHLHTAMSQMDGISSAGAYVTQASKWGHKAIAITDHGVVQAFPEAYGASQKHGIKVIYGVEANLVDDGVPIAYNEAHIPLLDSEFVVFDVETTGLSAVYNKIIELAAVKVKNGEIIDRFERFADPHEPLTNTIIELTGITDDMLKGQPEVEQVLNEFHAFIGDAVLVAHNASFDMGFLNTGFQKMGLGEAKNPVIDTLELGRFLYPTLKNHRLNTLCKKFDIELVSHHRAIYDAEATGHLLWRMVKDATERDILYHDQLNDNMGEGNFHRQRPSHCILLAQTQEGLKNLYKLVSMAHVEYFYRTPRIPRSQLQKHREGILVGSGCDKGEVFEGMMQKTPQEVEEIAKFYDYIEVQPLANYEHLIEKELVKSREALQEIVANIVKLGEQLGKPVVATGNAHYLKEEDYIYRKILIASQGGANPLNKQTLPQVHFRTTSEMLEAFAFLGEEKAKEIVVTNTNHIADQIEEIHPIPDKLYTPKIEGADEEIRQMSYNRARKIYGDPLPEIVEARLEKELKSIIGHGFAVIYLISHKLVKKSLDDGYLVGSRGSVGSSFVATMTEITEVNPLPPHYVCPNCHHSHFFNDGSVGSGYDLPDENCPKCGTPYVKDGQDIPFETFLGFKGDKVPDIDLNFSGEYQPRAHNYTKELFGESYVYRAGTIGTVAEKTAYGYVKGYQSDHDLHFRGAEIDRLVTGCTGVKRTTGQHPGGIIVVPDYMDIHDFCPIQFPADDRGAEWKTTHFDFHSIHDNLLKLDILGHDDPTVIRMLQDLSGIDPKTIPTDDPEVMKIFSGPDVLGVTEEQILCKTGTLGIPEFGTRFVRQMLEETKPSTFSELVQISGLSHGTDVWLNNANELIYNGTCELKDVIGCRDDIMVYLIYKGLEPSLAFKIMEFVRKGKGLQPEWIEEMKKHDVPDWYIGSCLKIKYMFPKAHAAAYVLMAVRIAYFKVHYPILYYASYFTVRADDFDLDTMVKGSAAIRAKIEEINGKGLDASPKEKSLLTVLELALEMVERGFSFQKVDLYRSEATEFLVEGNTLIPPFNALTGVGTNAAINIVKARDEREFLSKEDLQQRSKITKTVLENLDAHGCLEGLPESNQLSLF.

The region spanning 419 to 575 (FVVFDVETTG…YDAEATGHLL (157 aa)) is the Exonuclease domain.

The protein belongs to the DNA polymerase type-C family. PolC subfamily.

It is found in the cytoplasm. It catalyses the reaction DNA(n) + a 2'-deoxyribonucleoside 5'-triphosphate = DNA(n+1) + diphosphate. Required for replicative DNA synthesis. This DNA polymerase also exhibits 3' to 5' exonuclease activity. The polypeptide is DNA polymerase III PolC-type (Halalkalibacterium halodurans (strain ATCC BAA-125 / DSM 18197 / FERM 7344 / JCM 9153 / C-125) (Bacillus halodurans)).